A 135-amino-acid polypeptide reads, in one-letter code: Small ribosomal subunit protein eS24A (135 aa).

N-acetylserine is present on Ser-2. Ser-14 carries the phosphoserine modification. Lys-21 is covalently cross-linked (Glycyl lysine isopeptide (Lys-Gly) (interchain with G-Cter in ubiquitin)). Phosphoserine is present on Ser-56. The disordered stretch occupies residues 102–135 (KASRQQRKQKKNRDKKIFGTGKRLAKKVARRNAD). Composition is skewed to basic residues over residues 105-115 (RQQRKQKKNRD) and 124-135 (RLAKKVARRNAD).

Belongs to the eukaryotic ribosomal protein eS24 family. Component of the small ribosomal subunit (SSU). Mature yeast ribosomes consist of a small (40S) and a large (60S) subunit. The 40S small subunit contains 1 molecule of ribosomal RNA (18S rRNA) and 33 different proteins (encoded by 57 genes). The large 60S subunit contains 3 rRNA molecules (25S, 5.8S and 5S rRNA) and 46 different proteins (encoded by 81 genes). Post-translationally, N-terminally acetylated by acetyltransferase NatA. Also partially acetylated by NatC.

The protein resides in the cytoplasm. Its function is as follows. Component of the ribosome, a large ribonucleoprotein complex responsible for the synthesis of proteins in the cell. The small ribosomal subunit (SSU) binds messenger RNAs (mRNAs) and translates the encoded message by selecting cognate aminoacyl-transfer RNA (tRNA) molecules. The large subunit (LSU) contains the ribosomal catalytic site termed the peptidyl transferase center (PTC), which catalyzes the formation of peptide bonds, thereby polymerizing the amino acids delivered by tRNAs into a polypeptide chain. The nascent polypeptides leave the ribosome through a tunnel in the LSU and interact with protein factors that function in enzymatic processing, targeting, and the membrane insertion of nascent chains at the exit of the ribosomal tunnel. The protein is Small ribosomal subunit protein eS24A of Saccharomyces cerevisiae (strain ATCC 204508 / S288c) (Baker's yeast).